The primary structure comprises 448 residues: Iroquois-class homeodomain protein irx-3 (448 aa).

The segment at residues D108–N170 is a DNA-binding region (homeobox; TALE-type). The interval K171–N247 is disordered. A compositionally biased stretch (acidic residues) spans K195–D222. Over residues T223–S237 the composition is skewed to basic and acidic residues. The segment covering E238–N247 has biased composition (acidic residues).

It belongs to the TALE/IRO homeobox family. In terms of tissue distribution, primarily expressed in the developing central nervous system (CNS). At gastrula stage, expressed in both the superficial and deep layers of the presumptive neural plate with expression spreading to the prospective hindbrain, spinal cord and midbrain-hindbrain junction as neurulation proceeds. Not expressed in the anterior neural plate and CNS expression in the tadpole excludes the forebrain. Outside of the CNS, expressed around the closing blastopore at early gastrula stages and as gastrulation proceeds, expression switches to the anterior lateral plate mesoderm. In tadpoles, expressed in the ectodermal layer of the branchial arches, and in the otic vesicle. Also expressed in specific and overlapping dynamic patterns with irx1 and irx2 during pronephric kidney development. Renal expression begins before segment-specific terminal differentiation in the pronephric anlage at mid-neurula stage, and is later found in proximal tubule PT3 as well as intermediate tubule segments IT1 and IT2, with expression in the kidney being maintained through to the tadpole stage.

The protein localises to the nucleus. Acts partially redundantly with other irx members in neural patterning. Required for formation of the posterior forebrain, midbrain, hindbrain, and to a lesser extent, spinal cord. Both up-regulates and down-regulates gene expression during neural development. Acts early in neural plate development to induce proneural gene expression and specify a neural precursor state. Also up-regulates repressors that prevent neuronal differentiation. Required during at least two stages of pronephros kidney development; during neurula stages, maintains transcription of key renal genes to define the size and identity of the pronephric anlage, probably in part through regulation of bmp-signaling. Subsequently required for proper formation of the intermediate tubule segment of the pronephros. The protein is Iroquois-class homeodomain protein irx-3 (irx3) of Xenopus laevis (African clawed frog).